The following is a 248-amino-acid chain: Aspartate/glutamate leucyltransferase (248 aa).

This sequence belongs to the R-transferase family. Bpt subfamily.

Its subcellular location is the cytoplasm. The enzyme catalyses N-terminal L-glutamyl-[protein] + L-leucyl-tRNA(Leu) = N-terminal L-leucyl-L-glutamyl-[protein] + tRNA(Leu) + H(+). The catalysed reaction is N-terminal L-aspartyl-[protein] + L-leucyl-tRNA(Leu) = N-terminal L-leucyl-L-aspartyl-[protein] + tRNA(Leu) + H(+). Functions in the N-end rule pathway of protein degradation where it conjugates Leu from its aminoacyl-tRNA to the N-termini of proteins containing an N-terminal aspartate or glutamate. This Methylobacterium nodulans (strain LMG 21967 / CNCM I-2342 / ORS 2060) protein is Aspartate/glutamate leucyltransferase.